A 208-amino-acid chain; its full sequence is Protein-L-isoaspartate O-methyltransferase (208 aa).

Ser-59 is a catalytic residue.

This sequence belongs to the methyltransferase superfamily. L-isoaspartyl/D-aspartyl protein methyltransferase family.

It localises to the cytoplasm. The enzyme catalyses [protein]-L-isoaspartate + S-adenosyl-L-methionine = [protein]-L-isoaspartate alpha-methyl ester + S-adenosyl-L-homocysteine. In terms of biological role, catalyzes the methyl esterification of L-isoaspartyl residues in peptides and proteins that result from spontaneous decomposition of normal L-aspartyl and L-asparaginyl residues. It plays a role in the repair and/or degradation of damaged proteins. In Yersinia enterocolitica serotype O:8 / biotype 1B (strain NCTC 13174 / 8081), this protein is Protein-L-isoaspartate O-methyltransferase.